The sequence spans 175 residues: Development-specific protein S homolog (175 aa).

Beta/gamma crystallin 'Greek key' domains lie at 2–46 and 48–86; these read ANIT…KVPP and VKAI…KVMS. The segment at 87-90 is connecting peptide; the sequence is VPVQ. 2 consecutive Beta/gamma crystallin 'Greek key' domains span residues 91 to 135 and 136 to 175; these read PRAR…KPEG and LKVV…RITP.

Belongs to the beta/gamma-crystallin family.

The protein localises to the spore. The protein resides in the perispore. This chain is Development-specific protein S homolog (ops), found in Myxococcus xanthus.